The sequence spans 365 residues: Histidinol-phosphate aminotransferase 2 (365 aa).

Lysine 221 is subject to N6-(pyridoxal phosphate)lysine.

Belongs to the class-II pyridoxal-phosphate-dependent aminotransferase family. Histidinol-phosphate aminotransferase subfamily. As to quaternary structure, homodimer. Requires pyridoxal 5'-phosphate as cofactor.

It carries out the reaction L-histidinol phosphate + 2-oxoglutarate = 3-(imidazol-4-yl)-2-oxopropyl phosphate + L-glutamate. It functions in the pathway amino-acid biosynthesis; L-histidine biosynthesis; L-histidine from 5-phospho-alpha-D-ribose 1-diphosphate: step 7/9. The sequence is that of Histidinol-phosphate aminotransferase 2 (hisC2) from Bradyrhizobium diazoefficiens (strain JCM 10833 / BCRC 13528 / IAM 13628 / NBRC 14792 / USDA 110).